Consider the following 473-residue polypeptide: Photosystem II CP43 reaction center protein (473 aa).

Positions Met1 to Glu14 are excised as a propeptide. Position 15 is an N-acetylthreonine (Thr15). Phosphothreonine is present on Thr15. The next 5 helical transmembrane spans lie at Leu69–Ala93, Leu134–Asn155, Lys178–Thr200, Lys255–Ser275, and Trp291–Ala312. Residue Glu367 coordinates [CaMn4O5] cluster. The chain crosses the membrane as a helical span at residues Arg447–Pro471.

Belongs to the PsbB/PsbC family. PsbC subfamily. As to quaternary structure, PSII is composed of 1 copy each of membrane proteins PsbA, PsbB, PsbC, PsbD, PsbE, PsbF, PsbH, PsbI, PsbJ, PsbK, PsbL, PsbM, PsbT, PsbX, PsbY, PsbZ, Psb30/Ycf12, at least 3 peripheral proteins of the oxygen-evolving complex and a large number of cofactors. It forms dimeric complexes. Binds multiple chlorophylls and provides some of the ligands for the Ca-4Mn-5O cluster of the oxygen-evolving complex. It may also provide a ligand for a Cl- that is required for oxygen evolution. PSII binds additional chlorophylls, carotenoids and specific lipids. serves as cofactor.

Its subcellular location is the plastid. The protein resides in the chloroplast thylakoid membrane. In terms of biological role, one of the components of the core complex of photosystem II (PSII). It binds chlorophyll and helps catalyze the primary light-induced photochemical processes of PSII. PSII is a light-driven water:plastoquinone oxidoreductase, using light energy to abstract electrons from H(2)O, generating O(2) and a proton gradient subsequently used for ATP formation. This is Photosystem II CP43 reaction center protein from Lemna minor (Common duckweed).